Consider the following 301-residue polypeptide: Mitochondrial ornithine transporter 1 (301 aa).

Helical transmembrane passes span 5–25 (PAIQ…ACVL), 68–88 (SPAL…YGFC), 110–130 (AAAG…TELV), 168–188 (GFYH…FFFF), 207–227 (LGPV…WLAV), and 237–257 (IQVL…LSIV). 3 Solcar repeats span residues 7 to 91 (IQAA…CQQV), 104 to 197 (LSDL…SRSF), and 207 to 293 (LGPV…SRKL).

The protein belongs to the mitochondrial carrier (TC 2.A.29) family. Widely expressed, with highest levels in the liver, testis and kidney. In the brain, expressed at high levels in the hypothalamus.

It localises to the mitochondrion inner membrane. Its subcellular location is the mitochondrion membrane. The enzyme catalyses L-citrulline(in) + L-ornithine(out) + H(+)(in) = L-citrulline(out) + L-ornithine(in) + H(+)(out). It carries out the reaction L-ornithine(in) + L-arginine(out) = L-ornithine(out) + L-arginine(in). The catalysed reaction is L-ornithine(out) + L-lysine(in) = L-ornithine(in) + L-lysine(out). It catalyses the reaction L-lysine(out) + H(+)(in) = L-lysine(in) + H(+)(out). The enzyme catalyses L-ornithine(out) + H(+)(in) = L-ornithine(in) + H(+)(out). With respect to regulation, inhibited by pyridoxal 5'-phosphate as well as by mercurials (mersalyl, p-chloromercuribenzene sulfonate, and mercuric chloride), N-ethylmaleimide and spermine. Its function is as follows. Mitochondrial ornithine-citrulline antiporter. Catalyzes the exchange between cytosolic ornithine and mitochondrial citrulline plus an H(+), the proton compensates the positive charge of ornithine thus leading to an electroneutral transport. Plays a crucial role in the urea cycle, by connecting the cytosolic and the intramitochondrial reactions of the urea cycle. Lysine and arginine are also transported by the antiport mechanism. In addition, catalyzes an electroneutral exchange of ornithine or lysine for H(+), a reaction driven by the pH gradient across the inner membrane. The protein is Mitochondrial ornithine transporter 1 of Mus musculus (Mouse).